The chain runs to 92 residues: Small ribosomal subunit protein uS19 (92 aa).

It belongs to the universal ribosomal protein uS19 family.

In terms of biological role, protein S19 forms a complex with S13 that binds strongly to the 16S ribosomal RNA. This Francisella philomiragia subsp. philomiragia (strain ATCC 25017 / CCUG 19701 / FSC 153 / O#319-036) protein is Small ribosomal subunit protein uS19.